We begin with the raw amino-acid sequence, 85 residues long: Phosphocarrier protein HPr (85 aa).

One can recognise an HPr domain in the interval 1-85 (MFQRDIKITT…DLAKFLTTLK (85 aa)). The active-site Pros-phosphohistidine intermediate is His-15.

It belongs to the HPr family.

It localises to the cytoplasm. Its function is as follows. General (non sugar-specific) component of the phosphoenolpyruvate-dependent sugar phosphotransferase system (sugar PTS). This major carbohydrate active-transport system catalyzes the phosphorylation of incoming sugar substrates concomitantly with their translocation across the cell membrane. The phosphoryl group from phosphoenolpyruvate (PEP) is transferred to the phosphoryl carrier protein HPr by enzyme I. Phospho-HPr then transfers it to the PTS EIIA domain. The protein is Phosphocarrier protein HPr (ptsH) of Buchnera aphidicola subsp. Baizongia pistaciae (strain Bp).